The sequence spans 339 residues: MRINLNFHYDKLHLKEIIILIPKYHTNMVSFLTPILGLYGINVKEFINDFEIKTRFINFDVIVPTLVKISKIKTFEIILKTPYVISILSNLNNFSVTKPNIDLLSVYKISLLKSVFHSNFLDVFHRRIYLSLRKYLSLVIKVNFHLSVSSALAKKSLSNLNNLLLLKFNIQNNILFAKLLNNRYGLFVSFNNSSASNLNYLKTVLAIQNISIFKAKSNLLSSLTGNKYFFGNIYFIGATSLKYFIGFLKEVSLKSFGSNFFPIFFKIRSNLVSQPFVKLFLSVFNSQVKLINFYALRVIYTIFIKIFKNLNFLNKKLTFLLNRNNSNSNANISSNIKES.

This sequence belongs to the universal ribosomal protein uL11 family.

It localises to the mitochondrion. The sequence is that of Large ribosomal subunit protein uL11m (RPL11) from Acanthamoeba castellanii (Amoeba).